The chain runs to 613 residues: Probable potassium transport system protein Kup (613 aa).

11 helical membrane-spanning segments follow: residues 38–58 (VLGV…LKYL), 91–111 (WILV…GMIT), 128–148 (PSFG…LFLF), 159–179 (FFGP…LVEI), 206–226 (FLVL…YADM), 238–258 (WSLL…AVLL), 270–290 (ALVP…ATII), 328–348 (IYVP…VAGF), 357–377 (AYGV…YYVA), 387–407 (GLNL…GASV), and 410–430 (LFHG…LMLT).

This sequence belongs to the HAK/KUP transporter (TC 2.A.72) family.

The protein localises to the cell inner membrane. The catalysed reaction is K(+)(in) + H(+)(in) = K(+)(out) + H(+)(out). Functionally, transport of potassium into the cell. Likely operates as a K(+):H(+) symporter. The polypeptide is Probable potassium transport system protein Kup (Chlorobaculum tepidum (strain ATCC 49652 / DSM 12025 / NBRC 103806 / TLS) (Chlorobium tepidum)).